A 326-amino-acid polypeptide reads, in one-letter code: ATP synthase gamma chain (326 aa).

This sequence belongs to the ATPase gamma chain family. As to quaternary structure, F-type ATPases have 2 components, CF(1) - the catalytic core - and CF(0) - the membrane proton channel. CF(1) has five subunits: alpha(3), beta(3), gamma(1), delta(1), epsilon(1). CF(0) has three main subunits: a, b and c.

The protein resides in the cell membrane. Produces ATP from ADP in the presence of a proton gradient across the membrane. The gamma chain is believed to be important in regulating ATPase activity and the flow of protons through the CF(0) complex. The protein is ATP synthase gamma chain of Rhodococcus opacus (strain B4).